The primary structure comprises 261 residues: Cytochrome c oxidase subunit 3 (261 aa).

The Mitochondrial matrix segment spans residues 1–15 (MTHQTHAYHMVNPSP). A helical membrane pass occupies residues 16–34 (WPLTGALSALLMTSGLIMW). Topologically, residues 35-40 (FHFNSV) are mitochondrial intermembrane. The chain crosses the membrane as a helical span at residues 41 to 66 (ALLMLGLTTNMLTMYQWWRDVIREST). At 67 to 72 (FQGHHT) the chain is on the mitochondrial matrix side. Residues 73–105 (PNVQKGLRYGMILFIISEVLFFTGFFWAFYHSS) traverse the membrane as a helical segment. Residues 106-128 (LAPTPELGGCWPPTGIHPLNPLE) are Mitochondrial intermembrane-facing. Residues 129–152 (VPLLNTSVLLASGVSITWAHHSLM) form a helical membrane-spanning segment. Topologically, residues 153 to 155 (EGN) are mitochondrial matrix. The helical transmembrane segment at 156 to 183 (RNHMLQALFITIALGVYFTLLQASEYYE) threads the bilayer. The Mitochondrial intermembrane segment spans residues 184 to 190 (APFTISD). The helical transmembrane segment at 191-223 (GVYGSTFFVATGFHGLHVIIGSTFLIVCFFRQL) threads the bilayer. Topologically, residues 224 to 232 (KFHFTSSHH) are mitochondrial matrix. The helical transmembrane segment at 233–256 (FGFEAAAWYWHFVDVVWLFLYVSI) threads the bilayer. At 257–261 (YWWGS) the chain is on the mitochondrial intermembrane side.

This sequence belongs to the cytochrome c oxidase subunit 3 family. In terms of assembly, component of the cytochrome c oxidase (complex IV, CIV), a multisubunit enzyme composed of 14 subunits. The complex is composed of a catalytic core of 3 subunits MT-CO1, MT-CO2 and MT-CO3, encoded in the mitochondrial DNA, and 11 supernumerary subunits COX4I, COX5A, COX5B, COX6A, COX6B, COX6C, COX7A, COX7B, COX7C, COX8 and NDUFA4, which are encoded in the nuclear genome. The complex exists as a monomer or a dimer and forms supercomplexes (SCs) in the inner mitochondrial membrane with NADH-ubiquinone oxidoreductase (complex I, CI) and ubiquinol-cytochrome c oxidoreductase (cytochrome b-c1 complex, complex III, CIII), resulting in different assemblies (supercomplex SCI(1)III(2)IV(1) and megacomplex MCI(2)III(2)IV(2)).

Its subcellular location is the mitochondrion inner membrane. The enzyme catalyses 4 Fe(II)-[cytochrome c] + O2 + 8 H(+)(in) = 4 Fe(III)-[cytochrome c] + 2 H2O + 4 H(+)(out). Component of the cytochrome c oxidase, the last enzyme in the mitochondrial electron transport chain which drives oxidative phosphorylation. The respiratory chain contains 3 multisubunit complexes succinate dehydrogenase (complex II, CII), ubiquinol-cytochrome c oxidoreductase (cytochrome b-c1 complex, complex III, CIII) and cytochrome c oxidase (complex IV, CIV), that cooperate to transfer electrons derived from NADH and succinate to molecular oxygen, creating an electrochemical gradient over the inner membrane that drives transmembrane transport and the ATP synthase. Cytochrome c oxidase is the component of the respiratory chain that catalyzes the reduction of oxygen to water. Electrons originating from reduced cytochrome c in the intermembrane space (IMS) are transferred via the dinuclear copper A center (CU(A)) of subunit 2 and heme A of subunit 1 to the active site in subunit 1, a binuclear center (BNC) formed by heme A3 and copper B (CU(B)). The BNC reduces molecular oxygen to 2 water molecules using 4 electrons from cytochrome c in the IMS and 4 protons from the mitochondrial matrix. The chain is Cytochrome c oxidase subunit 3 (MT-CO3) from Nanger granti (Grant's gazelle).